We begin with the raw amino-acid sequence, 252 residues long: Triosephosphate isomerase (252 aa).

9-11 (NWK) is a binding site for substrate. His-98 acts as the Electrophile in catalysis. Glu-170 functions as the Proton acceptor in the catalytic mechanism. Substrate-binding residues include Gly-176 and Ser-215.

Belongs to the triosephosphate isomerase family. As to quaternary structure, homodimer.

It localises to the cytoplasm. It carries out the reaction D-glyceraldehyde 3-phosphate = dihydroxyacetone phosphate. It participates in carbohydrate biosynthesis; gluconeogenesis. The protein operates within carbohydrate degradation; glycolysis; D-glyceraldehyde 3-phosphate from glycerone phosphate: step 1/1. Involved in the gluconeogenesis. Catalyzes stereospecifically the conversion of dihydroxyacetone phosphate (DHAP) to D-glyceraldehyde-3-phosphate (G3P). The protein is Triosephosphate isomerase of Buchnera aphidicola subsp. Baizongia pistaciae (strain Bp).